The chain runs to 355 residues: MSIANLARRVVRALTPYQSARRIGGKGHVWLNANEAPQAYPFTIEGNRLNRYPECQPAEVVNGYAAYAGVNPDQVLVSRGADEAIELLIRTFCEAGEDQILICPPTYGMYAISAETCGVGIVEQPLTACRQPDWPAIADRLSDVKLVFLCSPNNPTGDLVGRDGLIALLEKARNRAIIVVDEAYIEFCPKASVVDLLARFPNLVVTRTLSKAFALAGIRCGFTLASTEVIAMLAKVIAPYPIPDPIAQIAAQALSPMGLELMQERVAELNKQKALIKTALTALPCVREVFEDKGNFILVRFVDSAAVFAAMKAAGIILRDFSTKPGLENSIRITIGYQNKMDAVLAVLRDQPVSL.

Lysine 211 bears the N6-(pyridoxal phosphate)lysine mark.

It belongs to the class-II pyridoxal-phosphate-dependent aminotransferase family. Histidinol-phosphate aminotransferase subfamily. Homodimer. Pyridoxal 5'-phosphate is required as a cofactor.

It catalyses the reaction L-histidinol phosphate + 2-oxoglutarate = 3-(imidazol-4-yl)-2-oxopropyl phosphate + L-glutamate. It functions in the pathway amino-acid biosynthesis; L-histidine biosynthesis; L-histidine from 5-phospho-alpha-D-ribose 1-diphosphate: step 7/9. The sequence is that of Histidinol-phosphate aminotransferase from Aeromonas salmonicida (strain A449).